Reading from the N-terminus, the 1169-residue chain is Pesticidal crystal protein Cry1Fb (1169 aa).

It belongs to the delta endotoxin family.

Its function is as follows. Promotes colloidosmotic lysis by binding to the midgut epithelial cells of insects. This is Pesticidal crystal protein Cry1Fb (cry1Fb) from Bacillus thuringiensis subsp. morrisoni.